A 151-amino-acid polypeptide reads, in one-letter code: Deoxyuridine 5'-triphosphate nucleotidohydrolase (151 aa).

Substrate contacts are provided by residues 70–72 (RSG), N83, 87–89 (LID), and M97.

The protein belongs to the dUTPase family. It depends on Mg(2+) as a cofactor.

The catalysed reaction is dUTP + H2O = dUMP + diphosphate + H(+). The protein operates within pyrimidine metabolism; dUMP biosynthesis; dUMP from dCTP (dUTP route): step 2/2. Its function is as follows. This enzyme is involved in nucleotide metabolism: it produces dUMP, the immediate precursor of thymidine nucleotides and it decreases the intracellular concentration of dUTP so that uracil cannot be incorporated into DNA. In Actinobacillus pleuropneumoniae serotype 7 (strain AP76), this protein is Deoxyuridine 5'-triphosphate nucleotidohydrolase.